Here is a 299-residue protein sequence, read N- to C-terminus: Protein LacX, chromosomal (299 aa).

This is Protein LacX, chromosomal (lacX) from Lactococcus lactis subsp. lactis (Streptococcus lactis).